The following is a 320-amino-acid chain: Beta-carotene ketolase (320 aa).

It carries out the reaction all-trans-beta-carotene + 2 AH2 + 2 O2 = echinenone + 2 A + 3 H2O. The catalysed reaction is echinenone + 2 AH2 + 2 O2 = canthaxanthin + 2 A + 3 H2O. It functions in the pathway carotenoid biosynthesis; astaxanthin biosynthesis. Its function is as follows. Converts beta-carotene to canthaxanthin via echinenone. The chain is Beta-carotene ketolase from Haematococcus lacustris (Green alga).